Consider the following 126-residue polypeptide: Fluoride-specific ion channel FluC (126 aa).

4 helical membrane passes run 4-24 (FAIL…RYLV), 38-58 (YGTL…IAAF), 71-91 (IIGL…MDNV), and 104-124 (LNVV…FQLL). Positions 78 and 81 each coordinate Na(+).

The protein belongs to the fluoride channel Fluc/FEX (TC 1.A.43) family.

The protein localises to the cell inner membrane. It carries out the reaction fluoride(in) = fluoride(out). With respect to regulation, na(+) is not transported, but it plays an essential structural role and its presence is essential for fluoride channel function. Its function is as follows. Fluoride-specific ion channel. Important for reducing fluoride concentration in the cell, thus reducing its toxicity. The sequence is that of Fluoride-specific ion channel FluC from Vibrio vulnificus (strain CMCP6).